Here is a 456-residue protein sequence, read N- to C-terminus: Bifunctional protein GlmU (456 aa).

The pyrophosphorylase stretch occupies residues 1 to 229 (MLNNAMSVVI…LSEVEGVNNR (229 aa)). Residues 11-14 (LAAG), Lys-25, Gln-76, 81-82 (GT), 103-105 (YGD), Gly-140, Glu-154, Asn-169, and Asn-227 each bind UDP-N-acetyl-alpha-D-glucosamine. Mg(2+) is bound at residue Asp-105. Position 227 (Asn-227) interacts with Mg(2+). Positions 230–250 (LQLSRLERVYQSEQAEKLLLA) are linker. An N-acetyltransferase region spans residues 251–456 (GVMLRDPARF…EGWRRPVKKK (206 aa)). UDP-N-acetyl-alpha-D-glucosamine contacts are provided by Arg-333 and Lys-351. His-363 (proton acceptor) is an active-site residue. 2 residues coordinate UDP-N-acetyl-alpha-D-glucosamine: Tyr-366 and Asn-377. Residues Ala-380, 386–387 (NY), Ser-405, Ala-423, and Arg-440 contribute to the acetyl-CoA site.

This sequence in the N-terminal section; belongs to the N-acetylglucosamine-1-phosphate uridyltransferase family. In the C-terminal section; belongs to the transferase hexapeptide repeat family. Homotrimer. The cofactor is Mg(2+).

It localises to the cytoplasm. The enzyme catalyses alpha-D-glucosamine 1-phosphate + acetyl-CoA = N-acetyl-alpha-D-glucosamine 1-phosphate + CoA + H(+). It catalyses the reaction N-acetyl-alpha-D-glucosamine 1-phosphate + UTP + H(+) = UDP-N-acetyl-alpha-D-glucosamine + diphosphate. It participates in nucleotide-sugar biosynthesis; UDP-N-acetyl-alpha-D-glucosamine biosynthesis; N-acetyl-alpha-D-glucosamine 1-phosphate from alpha-D-glucosamine 6-phosphate (route II): step 2/2. The protein operates within nucleotide-sugar biosynthesis; UDP-N-acetyl-alpha-D-glucosamine biosynthesis; UDP-N-acetyl-alpha-D-glucosamine from N-acetyl-alpha-D-glucosamine 1-phosphate: step 1/1. Its pathway is bacterial outer membrane biogenesis; LPS lipid A biosynthesis. Catalyzes the last two sequential reactions in the de novo biosynthetic pathway for UDP-N-acetylglucosamine (UDP-GlcNAc). The C-terminal domain catalyzes the transfer of acetyl group from acetyl coenzyme A to glucosamine-1-phosphate (GlcN-1-P) to produce N-acetylglucosamine-1-phosphate (GlcNAc-1-P), which is converted into UDP-GlcNAc by the transfer of uridine 5-monophosphate (from uridine 5-triphosphate), a reaction catalyzed by the N-terminal domain. The protein is Bifunctional protein GlmU of Escherichia coli O81 (strain ED1a).